Consider the following 379-residue polypeptide: Protein OSCP1 (379 aa).

As to expression, predominantly expressed in testis.

The protein resides in the basal cell membrane. Functionally, may be involved in drug clearance in the placenta. In Mus musculus (Mouse), this protein is Protein OSCP1 (Oscp1).